A 195-amino-acid chain; its full sequence is MAKPVRAIVGLGNPGPDYAQTRHNAGALWLEHLARKKGQFLRPDKKLHGDYCKISIAGEDIHLLFPSTFMNRSGQSVLSLSQFYKIELENILVAHDELDIDAGTLRLKFGGGHGGHNGLRDIIRCFGGNKDFPRMRLGIGHPGDKSKVTSHVLGRISKEDMDKLESAFYQLDTHLEAIISGQWDTAMNRLHSFRA.

Y18 is a tRNA binding site. H23 (proton acceptor) is an active-site residue. TRNA is bound by residues F69, N71, and N117.

It belongs to the PTH family. Monomer.

Its subcellular location is the cytoplasm. The catalysed reaction is an N-acyl-L-alpha-aminoacyl-tRNA + H2O = an N-acyl-L-amino acid + a tRNA + H(+). Its function is as follows. Hydrolyzes ribosome-free peptidyl-tRNAs (with 1 or more amino acids incorporated), which drop off the ribosome during protein synthesis, or as a result of ribosome stalling. Functionally, catalyzes the release of premature peptidyl moieties from peptidyl-tRNA molecules trapped in stalled 50S ribosomal subunits, and thus maintains levels of free tRNAs and 50S ribosomes. This Hahella chejuensis (strain KCTC 2396) protein is Peptidyl-tRNA hydrolase.